The chain runs to 559 residues: Excitatory amino acid transporter 5 (559 aa).

Over 1-16 the chain is Cytoplasmic; it reads MVLDAVLARGRTVCKH. 3 helical membrane-spanning segments follow: residues 17 to 37, 60 to 80, and 94 to 114; these read NGLL…GFFL, MLKM…LASL, and AYYL…VSII. The Extracellular portion of the chain corresponds to 115 to 215; sequence HPGGAAQKET…EIVYKSEPGT (101 aa). The N-linked (GlcNAc...) asparagine glycan is linked to Asn-190. A helical transmembrane segment spans residues 216 to 236; it reads SDGMNVLGIVIFSATMGIMLG. The N-linked (GlcNAc...) asparagine glycan is linked to Asn-253. 6 helical membrane passes run 259-279, 298-318, 329-349, 371-391, 413-433, and 456-476; these read IVAV…AGKI, TVVC…YFLI, GVLQ…TLPI, VGAT…AIFI, AASI…VIVL, and FRTM…AHIC.

Belongs to the dicarboxylate/amino acid:cation symporter (DAACS) (TC 2.A.23) family. SLC1A7 subfamily. In terms of assembly, interacts with the PDZ domains of DLG4. In terms of tissue distribution, expressed in retina, located in both cone and rod photoreceptor terminals and in axon terminals of rod bipolar cells.

It is found in the photoreceptor inner segment membrane. It localises to the synaptic cell membrane. The enzyme catalyses K(+)(in) + L-glutamate(out) + 3 Na(+)(out) + H(+)(out) = K(+)(out) + L-glutamate(in) + 3 Na(+)(in) + H(+)(in). It carries out the reaction K(+)(in) + L-aspartate(out) + 3 Na(+)(out) + H(+)(out) = K(+)(out) + L-aspartate(in) + 3 Na(+)(in) + H(+)(in). The catalysed reaction is D-aspartate(out) + K(+)(in) + 3 Na(+)(out) + H(+)(out) = D-aspartate(in) + K(+)(out) + 3 Na(+)(in) + H(+)(in). Its function is as follows. Sodium-dependent, high-affinity amino acid transporter that mediates the uptake of L-glutamate and also L-aspartate and D-aspartate. Functions as a symporter that transports one amino acid molecule together with two or three Na(+) ions and one proton, in parallel with the counter-transport of one K(+) ion. Acts primarily as an inhibitory glutamate-gated chloride channel being a major inhibitory presynaptic receptor at mammalian rod bipolar cell axon terminals. Glutamate binding gates a large Cl(-) conductance that mediates inhibition, affecting visual processing in the retina. This is Excitatory amino acid transporter 5 from Mus musculus (Mouse).